The chain runs to 317 residues: L-lactate dehydrogenase (317 aa).

Residues F16 to V17, D38, K43, Y69, and G83 to A84 each bind NAD(+). Positions 86 and 92 each coordinate substrate. Residues S105, A122–N124, and S147 contribute to the NAD(+) site. N124–D127 serves as a coordination point for substrate. D152–R155 lines the substrate pocket. Residues R157 and Q169–H172 contribute to the beta-D-fructose 1,6-bisphosphate site. The active-site Proton acceptor is H179. Y224 carries the phosphotyrosine modification. Substrate is bound at residue T233.

It belongs to the LDH/MDH superfamily. LDH family. As to quaternary structure, exists as a dimer and a tetramer (dimer of dimers). The conversion occurs via the binding of fructose 1,6-bisphosphate (FBP) to the dimer.

The protein resides in the cytoplasm. It carries out the reaction (S)-lactate + NAD(+) = pyruvate + NADH + H(+). Its pathway is fermentation; pyruvate fermentation to lactate; (S)-lactate from pyruvate: step 1/1. With respect to regulation, allosterically activated by fructose 1,6-bisphosphate (FBP). The improvement in affinity for substrate occurs in two steps; the binding of fructose 1,6-bisphosphate (FBP) to the dimer, and the dimer to tetramer conversion. Functionally, catalyzes the conversion of lactate to pyruvate. This Geobacillus stearothermophilus (Bacillus stearothermophilus) protein is L-lactate dehydrogenase.